An 855-amino-acid chain; its full sequence is Nuclear valosin-containing protein-like (855 aa).

The segment at 1 to 219 (MKPRPGVFVD…SLLESDKKRK (219 aa)) is interaction with RPL5. Positions 49–52 (RRKR) match the Nucleolar localization signal motif. Lys70 is subject to N6-acetyllysine. Residues 83-234 (LAKRARQDEE…KGNKRKTENL (152 aa)) form a disordered region. The Nuclear localization signal signature appears at 85 to 88 (KRAR). Acidic residues predominate over residues 90 to 110 (DEEDEYTESYSDDDSNMEDYP). Composition is skewed to polar residues over residues 113-123 (QSANPMNSSLL) and 131-157 (SESV…SKTG). Ser133 carries the post-translational modification Phosphoserine. The residue at position 137 (Thr137) is a Phosphothreonine. Lys155 bears the N6-acetyllysine mark. Ser190 carries the post-translational modification Phosphoserine. Lys207 participates in a covalent cross-link: Glycyl lysine isopeptide (Lys-Gly) (interchain with G-Cter in SUMO2). Residues Ser210 and Ser214 each carry the phosphoserine modification. Residues 217-228 (KRKGRAKGKGNK) show a composition bias toward basic residues. Positions 217–231 (KRKGRAKGKGNKRKT) match the Nuclear localization signal motif. The tract at residues 266–473 (VGGNDATLKE…LTPGFVGADL (208 aa)) is interaction with WDR74. Position 304 to 311 (304 to 311 (GPPGCGKT)) interacts with ATP. The segment at 496–523 (QKKKPEIEGLPSEGDQEERLGAEPTSET) is disordered. 621–628 (GPPGCGKT) is an ATP binding site.

Belongs to the AAA ATPase family. In terms of assembly, interacts with NCL/nucleolin. Isoform 1 and isoform 2 interact with TERT and isoform 1 exhibits a higher binding affinity for TERT compared to isoform 2. Isoform 1 interacts with MTREX in an ATP-dependent manner; the interaction is required to associate NVL with nuclear RNA exosome. Isoform 1 interacts with RPL5 in an ATP-dependent manner. Interacts with WDR74 (through WDR repeats); the interaction is independent of RNA or pre-60S ribosome particles.

Its subcellular location is the nucleus. The protein localises to the nucleolus. It is found in the nucleoplasm. Participates in the assembly of the telomerase holoenzyme and effecting of telomerase activity via its interaction with TERT. Involved in both early and late stages of the pre-rRNA processing pathways. Spatiotemporally regulates 60S ribosomal subunit biogenesis in the nucleolus. Catalyzes the release of specific assembly factors, such as WDR74, from pre-60S ribosomal particles through the ATPase activity. The sequence is that of Nuclear valosin-containing protein-like from Mus musculus (Mouse).